The following is a 174-amino-acid chain: Micrococcal nuclease (174 aa).

The first 23 residues, 1–23 (MKSALAALRAVAAAVVLIVSVPA), serve as a signal peptide directing secretion. Catalysis depends on residues R52, E60, and R94.

It belongs to the thermonuclease family.

It carries out the reaction Endonucleolytic cleavage to nucleoside 3'-phosphates and 3'-phosphooligonucleotide end-products.. This chain is Micrococcal nuclease (nuc), found in Shigella flexneri.